The chain runs to 479 residues: GTPase Der (479 aa).

EngA-type G domains are found at residues 3 to 167 (FTLA…EAAA) and 191 to 366 (LQIA…ATWN). Residues 9–16 (GRPNVGKS), 56–60 (DTAGL), 119–122 (NKAE), 197–204 (GRPNAGKS), 244–248 (DTAGM), and 309–312 (NKWD) contribute to the GTP site. Positions 367 to 453 (TRISTARLNQ…RLWMRSQADD (87 aa)) constitute a KH-like domain. The segment at 449 to 479 (SQADDNPYKNRKKSTPSRLNKHVRKGETKKG) is disordered. Basic residues predominate over residues 457–472 (KNRKKSTPSRLNKHVR).

It belongs to the TRAFAC class TrmE-Era-EngA-EngB-Septin-like GTPase superfamily. EngA (Der) GTPase family. As to quaternary structure, associates with the 50S ribosomal subunit.

GTPase that plays an essential role in the late steps of ribosome biogenesis. The sequence is that of GTPase Der from Jannaschia sp. (strain CCS1).